The chain runs to 118 residues: Na(+)/H(+) antiporter subunit G1 (118 aa).

3 consecutive transmembrane segments (helical) span residues 9–29 (LAVI…IGII), 47–67 (LGAI…DGYI), and 69–89 (MQLI…SHLI).

This sequence belongs to the CPA3 antiporters (TC 2.A.63) subunit G family. As to quaternary structure, may form a heterooligomeric complex that consists of seven subunits: mnhA1, mnhB1, mnhC1, mnhD1, mnhE1, mnhF1 and mnhG1.

The protein localises to the cell membrane. Its function is as follows. Mnh complex is a Na(+)/H(+) antiporter involved in Na(+) excretion. The protein is Na(+)/H(+) antiporter subunit G1 (mnhG1) of Staphylococcus haemolyticus (strain JCSC1435).